The sequence spans 443 residues: ATP-dependent protease ATPase subunit HslU (443 aa).

Residues isoleucine 18, 60 to 65 (GVGKTE), aspartate 256, glutamate 321, and arginine 393 contribute to the ATP site.

It belongs to the ClpX chaperone family. HslU subfamily. As to quaternary structure, a double ring-shaped homohexamer of HslV is capped on each side by a ring-shaped HslU homohexamer. The assembly of the HslU/HslV complex is dependent on binding of ATP.

Its subcellular location is the cytoplasm. Functionally, ATPase subunit of a proteasome-like degradation complex; this subunit has chaperone activity. The binding of ATP and its subsequent hydrolysis by HslU are essential for unfolding of protein substrates subsequently hydrolyzed by HslV. HslU recognizes the N-terminal part of its protein substrates and unfolds these before they are guided to HslV for hydrolysis. This is ATP-dependent protease ATPase subunit HslU from Vibrio parahaemolyticus serotype O3:K6 (strain RIMD 2210633).